We begin with the raw amino-acid sequence, 92 residues long: Small ribosomal subunit protein uS19 (92 aa).

Belongs to the universal ribosomal protein uS19 family.

Protein S19 forms a complex with S13 that binds strongly to the 16S ribosomal RNA. This is Small ribosomal subunit protein uS19 from Acidiphilium cryptum (strain JF-5).